The chain runs to 282 residues: ATP synthase gamma chain (282 aa).

The protein belongs to the ATPase gamma chain family. F-type ATPases have 2 components, CF(1) - the catalytic core - and CF(0) - the membrane proton channel. CF(1) has five subunits: alpha(3), beta(3), gamma(1), delta(1), epsilon(1). CF(0) has three main subunits: a, b and c. In this bacterium the a and b subunits are transcribed but do not seem to be translated, thus the ATP synthase consists of the alpha, beta, gamma, delta, epsilon and c subunits.

The protein resides in the cell membrane. Functionally, produces ATP from ADP in the presence of a proton gradient across the membrane. The gamma chain is believed to be important in regulating ATPase activity and the flow of protons through the CF(0) complex. This Moorella thermoacetica (strain ATCC 39073 / JCM 9320) protein is ATP synthase gamma chain.